The chain runs to 412 residues: Arginine biosynthesis bifunctional protein ArgJ (412 aa).

Residues Thr-158, Lys-184, Thr-195, Glu-284, Asn-407, and Ser-412 each coordinate substrate. The active-site Nucleophile is the Thr-195.

This sequence belongs to the ArgJ family. In terms of assembly, heterotetramer of two alpha and two beta chains.

It localises to the cytoplasm. It catalyses the reaction N(2)-acetyl-L-ornithine + L-glutamate = N-acetyl-L-glutamate + L-ornithine. It carries out the reaction L-glutamate + acetyl-CoA = N-acetyl-L-glutamate + CoA + H(+). Its pathway is amino-acid biosynthesis; L-arginine biosynthesis; L-ornithine and N-acetyl-L-glutamate from L-glutamate and N(2)-acetyl-L-ornithine (cyclic): step 1/1. It functions in the pathway amino-acid biosynthesis; L-arginine biosynthesis; N(2)-acetyl-L-ornithine from L-glutamate: step 1/4. Functionally, catalyzes two activities which are involved in the cyclic version of arginine biosynthesis: the synthesis of N-acetylglutamate from glutamate and acetyl-CoA as the acetyl donor, and of ornithine by transacetylation between N(2)-acetylornithine and glutamate. In Bartonella quintana (strain Toulouse) (Rochalimaea quintana), this protein is Arginine biosynthesis bifunctional protein ArgJ.